Consider the following 308-residue polypeptide: Porphobilinogen deaminase (308 aa).

Cys-240 is subject to S-(dipyrrolylmethanemethyl)cysteine.

This sequence belongs to the HMBS family. As to quaternary structure, monomer. It depends on dipyrromethane as a cofactor.

The catalysed reaction is 4 porphobilinogen + H2O = hydroxymethylbilane + 4 NH4(+). Its pathway is porphyrin-containing compound metabolism; protoporphyrin-IX biosynthesis; coproporphyrinogen-III from 5-aminolevulinate: step 2/4. Its function is as follows. Tetrapolymerization of the monopyrrole PBG into the hydroxymethylbilane pre-uroporphyrinogen in several discrete steps. The chain is Porphobilinogen deaminase from Maridesulfovibrio salexigens (strain ATCC 14822 / DSM 2638 / NCIMB 8403 / VKM B-1763) (Desulfovibrio salexigens).